We begin with the raw amino-acid sequence, 186 residues long: ATP synthase subunit delta (186 aa).

Belongs to the ATPase delta chain family. F-type ATPases have 2 components, F(1) - the catalytic core - and F(0) - the membrane proton channel. F(1) has five subunits: alpha(3), beta(3), gamma(1), delta(1), epsilon(1). F(0) has three main subunits: a(1), b(2) and c(10-14). The alpha and beta chains form an alternating ring which encloses part of the gamma chain. F(1) is attached to F(0) by a central stalk formed by the gamma and epsilon chains, while a peripheral stalk is formed by the delta and b chains.

It is found in the cell membrane. F(1)F(0) ATP synthase produces ATP from ADP in the presence of a proton or sodium gradient. F-type ATPases consist of two structural domains, F(1) containing the extramembraneous catalytic core and F(0) containing the membrane proton channel, linked together by a central stalk and a peripheral stalk. During catalysis, ATP synthesis in the catalytic domain of F(1) is coupled via a rotary mechanism of the central stalk subunits to proton translocation. Functionally, this protein is part of the stalk that links CF(0) to CF(1). It either transmits conformational changes from CF(0) to CF(1) or is implicated in proton conduction. This is ATP synthase subunit delta from Symbiobacterium thermophilum (strain DSM 24528 / JCM 14929 / IAM 14863 / T).